Reading from the N-terminus, the 248-residue chain is Glucosamine-6-phosphate isomerase (248 aa).

Residue Asp-68 is the Proton acceptor; for enolization step of the active site. The active-site For ring-opening step is the Glu-137. Residue His-139 is the Proton acceptor; for ring-opening step of the active site. Catalysis depends on Glu-144, which acts as the For ring-opening step.

This sequence belongs to the glucosamine/galactosamine-6-phosphate isomerase family. As to quaternary structure, monomer.

It catalyses the reaction alpha-D-glucosamine 6-phosphate + H2O = beta-D-fructose 6-phosphate + NH4(+). This is Glucosamine-6-phosphate isomerase (NAG1) from Candida albicans (strain SC5314 / ATCC MYA-2876) (Yeast).